The chain runs to 251 residues: Coenzyme F420:L-glutamate ligase (251 aa).

GTP is bound by residues 9 to 12 (LPEI), 38 to 39 (ST), and Lys-43. Asp-113 contacts a divalent metal cation. Residue Asn-116 participates in GTP binding. A divalent metal cation is bound by residues Asp-149, Thr-150, and Glu-207. 205–212 (AGEGDGGT) is a GTP binding site.

The protein belongs to the CofE family. Homodimer. Mg(2+) serves as cofactor. The cofactor is Mn(2+). K(+) is required as a cofactor.

The enzyme catalyses oxidized coenzyme F420-0 + GTP + L-glutamate = oxidized coenzyme F420-1 + GDP + phosphate + H(+). It carries out the reaction oxidized coenzyme F420-1 + GTP + L-glutamate = oxidized coenzyme F420-2 + GDP + phosphate + H(+). It functions in the pathway cofactor biosynthesis; coenzyme F420 biosynthesis. Catalyzes the GTP-dependent successive addition of two or more gamma-linked L-glutamates to the L-lactyl phosphodiester of 7,8-didemethyl-8-hydroxy-5-deazariboflavin (F420-0) to form coenzyme F420-0-glutamyl-glutamate (F420-2) or polyglutamated F420 derivatives. This chain is Coenzyme F420:L-glutamate ligase, found in Halorubrum lacusprofundi (strain ATCC 49239 / DSM 5036 / JCM 8891 / ACAM 34).